A 464-amino-acid polypeptide reads, in one-letter code: Dolichyl-diphosphooligosaccharide--protein glycosyltransferase subunit 1B (464 aa).

An N-terminal signal peptide occupies residues 1-24; the sequence is MAARIGIFSVFVAVLLSISAFSSA. Residues 25-436 are Lumenal-facing; sequence QDLQIVNAER…TFKPIYMLAE (412 aa). Residues N106 and N298 are each glycosylated (N-linked (GlcNAc...) asparagine). K310 is covalently cross-linked (Glycyl lysine isopeptide (Lys-Gly) (interchain with G-Cter in ubiquitin)). N-linked (GlcNAc...) asparagine glycosylation occurs at N352. The chain crosses the membrane as a helical span at residues 437 to 457; the sequence is PFMLVSAFFLVFVASLAYVHI. The Cytoplasmic portion of the chain corresponds to 458 to 464; sequence DLNIVRK.

The protein belongs to the OST1 family. As to quaternary structure, component of the oligosaccharyltransferase (OST) complex.

It is found in the endoplasmic reticulum membrane. It functions in the pathway protein modification; protein glycosylation. Functionally, subunit of the oligosaccharyl transferase (OST) complex that catalyzes the initial transfer of a defined glycan (Glc(3)Man(9)GlcNAc(2) in eukaryotes) from the lipid carrier dolichol-pyrophosphate to an asparagine residue within an Asn-X-Ser/Thr consensus motif in nascent polypeptide chains, the first step in protein N-glycosylation. N-glycosylation occurs cotranslationally and the complex associates with the Sec61 complex at the channel-forming translocon complex that mediates protein translocation across the endoplasmic reticulum (ER). All subunits are required for a maximal enzyme activity. This is Dolichyl-diphosphooligosaccharide--protein glycosyltransferase subunit 1B (OST1B) from Arabidopsis thaliana (Mouse-ear cress).